Reading from the N-terminus, the 93-residue chain is Small ribosomal subunit protein uS19 (93 aa).

It belongs to the universal ribosomal protein uS19 family.

Functionally, protein S19 forms a complex with S13 that binds strongly to the 16S ribosomal RNA. The protein is Small ribosomal subunit protein uS19 of Synechococcus sp. (strain JA-3-3Ab) (Cyanobacteria bacterium Yellowstone A-Prime).